The following is a 122-amino-acid chain: MERIPSLASLVSLLIIFATVVNQTRASICNDRLGLCDGCDQRCKAKHGPSCESKCDGPVGMLLCTCTYECGPTKLCNGGLGNCGESCNEQCCDRNCAQRYNGGHGYCNTLDDFSLCLCKYPC.

The first 26 residues, 1-26 (MERIPSLASLVSLLIIFATVVNQTRA), serve as a signal peptide directing secretion. 8 disulfides stabilise this stretch: cysteine 29-cysteine 70, cysteine 36-cysteine 55, cysteine 39-cysteine 64, cysteine 43-cysteine 66, cysteine 76-cysteine 122, cysteine 87-cysteine 107, cysteine 92-cysteine 116, and cysteine 96-cysteine 118.

It belongs to the DEFL family.

It localises to the secreted. Its function is as follows. Confers broad-spectrum resistance to pathogens. This chain is Defensin-like protein 181 (PDF3.1), found in Arabidopsis thaliana (Mouse-ear cress).